A 100-amino-acid polypeptide reads, in one-letter code: Putative pterin-4-alpha-carbinolamine dehydratase (100 aa).

The protein belongs to the pterin-4-alpha-carbinolamine dehydratase family.

The enzyme catalyses (4aS,6R)-4a-hydroxy-L-erythro-5,6,7,8-tetrahydrobiopterin = (6R)-L-erythro-6,7-dihydrobiopterin + H2O. The sequence is that of Putative pterin-4-alpha-carbinolamine dehydratase from Bradyrhizobium diazoefficiens (strain JCM 10833 / BCRC 13528 / IAM 13628 / NBRC 14792 / USDA 110).